A 69-amino-acid chain; its full sequence is Small integral membrane protein 20 (69 aa).

At 1-8 the chain is on the mitochondrial matrix side; that stretch reads MAAARNLR. A helical membrane pass occupies residues 9-29; it reads TALIFGGFISMVGAAFYPIYF. The Mitochondrial intermembrane segment spans residues 30 to 69; that stretch reads RPLLRLEEYQKEQAVNRAGIVQEDVQPPGLKVWSDPFGRK. Phenylalanine amide is present on phenylalanine 66.

As to quaternary structure, component of the MITRAC (mitochondrial translation regulation assembly intermediate of cytochrome c oxidase complex) complex, the core components of this complex being Coa3/Mitrac12 and Cox14. Interacts with Coa3/Mitrac12 and Cox4i1. Directly interacts with newly synthesized Mt-Co1/Cox1. As to expression, highly expressed in the hypothalamus, substantia nigra reticulata, Edinger-Westphal nucleus, and nucleus of the solitary tract/dorsal motor nucleus of the vagus, the spinal cord, and sensory ganglia (at protein level). Also expressed in the heart, thymus, esophagus, stomach, spleen, lung, pituitary gland, kidney, jejunum, duodenum, ileum, cerebrum, pons, and colon (at protein level). Expressed in preadipocytes and apidocytes (at protein level). Expressed in pancreatic islet cells (at protein level).

The protein resides in the mitochondrion inner membrane. The protein localises to the secreted. In terms of biological role, component of the MITRAC (mitochondrial translation regulation assembly intermediate of cytochrome c oxidase complex) complex, that regulates cytochrome c oxidase assembly. Promotes the progression of complex assembly after the association of Mt-Co1/Cox11 with Cox4I1 and Cox6c. Chaperone-like assembly factor required to stabilize newly synthesized Mt-Co1/Cox1 and to prevent its premature turnover. Peptide involved in a broad spectrum of regulatory functions. Is a ligand for GPR173. As part of the reproductive cycle, it regulates gonadotropin-releasing hormone (GnRH) signaling in the hypothalamus and pituitary gland which augments the release of luteinizing hormone. More specifically, it regulates the expression of transcription factors CEBPB and POU2F1/OCT1 through the cAMP-PKA signaling pathway, which subsequently regulate the expression of GNRHR and KISS1. Plays a protective role in memory retention through activation of GNRHR. Regulates the secretion of AVP by hypothalamic neurons. Plays a role in the transduction of the itch sensation. Induces anxiolytic effects, reducing behavior associated with anxiety. Regulates food intake as well as satiation and satiety by increasing NUCB2 expression in neurons. In the ovary, it regulates follicular growth by stimulating granulosa cell proliferation by increasing the expression of GPR173, CREB1, CYP19A1, KITLG, FSHR, and LHCGR. It also increases the production of estradiol (E2). In the heart, it regulates contractility and relaxation by activating the AKT1-NOS3 and MAPK1-MAPK3 signaling pathways. It also plays a cardioprotective role during ischemia, where it activates the SAFE and RISK pathways. Stimulates the proliferation and differentiation of preadipocytes. In pancreatic islet cells, it induces proliferation of islet cells as well as the production of INS1 and INS2 through activation of the MAPK1-MAPK3 signaling pathways. This chain is Small integral membrane protein 20, found in Rattus norvegicus (Rat).